Here is a 446-residue protein sequence, read N- to C-terminus: Trigger factor (446 aa).

The 86-residue stretch at 182 to 267 (GDKVVVDYQN…VKNIFMMKAI (86 aa)) folds into the PPIase FKBP-type domain.

This sequence belongs to the FKBP-type PPIase family. Tig subfamily.

The protein localises to the cytoplasm. It catalyses the reaction [protein]-peptidylproline (omega=180) = [protein]-peptidylproline (omega=0). Its function is as follows. Involved in protein export. Acts as a chaperone by maintaining the newly synthesized protein in an open conformation. Functions as a peptidyl-prolyl cis-trans isomerase. This chain is Trigger factor, found in Ehrlichia ruminantium (strain Gardel).